We begin with the raw amino-acid sequence, 180 residues long: Ribosome maturation factor RimM (180 aa).

Residues 108-180 (PDEYYWVDLE…LIVVDWDPDF (73 aa)) enclose the PRC barrel domain.

Belongs to the RimM family. In terms of assembly, binds ribosomal protein uS19.

It is found in the cytoplasm. Its function is as follows. An accessory protein needed during the final step in the assembly of 30S ribosomal subunit, possibly for assembly of the head region. Essential for efficient processing of 16S rRNA. May be needed both before and after RbfA during the maturation of 16S rRNA. It has affinity for free ribosomal 30S subunits but not for 70S ribosomes. The chain is Ribosome maturation factor RimM from Xanthomonas euvesicatoria pv. vesicatoria (strain 85-10) (Xanthomonas campestris pv. vesicatoria).